We begin with the raw amino-acid sequence, 465 residues long: Argininosuccinate lyase (465 aa).

This sequence belongs to the lyase 1 family. Argininosuccinate lyase subfamily.

It localises to the cytoplasm. It catalyses the reaction 2-(N(omega)-L-arginino)succinate = fumarate + L-arginine. Its pathway is amino-acid biosynthesis; L-arginine biosynthesis; L-arginine from L-ornithine and carbamoyl phosphate: step 3/3. This chain is Argininosuccinate lyase, found in Deinococcus geothermalis (strain DSM 11300 / CIP 105573 / AG-3a).